We begin with the raw amino-acid sequence, 418 residues long: 6-methylpretetramide 4-monooxygenase (418 aa).

FAD is bound by residues 15–44 (DVCV…LVER) and 289–299 (WARDGLLLIGD).

The protein belongs to the PheA/TfdB FAD monooxygenase family. FAD serves as cofactor.

It carries out the reaction 6-methylpretetramide + NADPH + O2 + 2 H(+) = 4-hydroxy-6-methylpretetramide + NADP(+) + H2O. It participates in antibiotic biosynthesis; oxytetracycline biosynthesis. In terms of biological role, involved in the biosynthesis of the tetracycline antibiotic, oxytetracycline. Catalyzes the C-4 hydroxylation of 6-methylpretetramide to yield the intermediate 4-hydroxyl-6-methylpretetramid, which is subsequently hydroxylated by OxyL to yield 4-keto-anhydrotetracycline. OxyE serves as the ancillary enzyme to assist OxyL in the hydroxylation of C-4. The polypeptide is 6-methylpretetramide 4-monooxygenase (Streptomyces rimosus).